The primary structure comprises 242 residues: 7-cyano-7-deazaguanine synthase (242 aa).

The tract at residues 1-25 (MNSRKDKNSKGKNSDTKRKKSSQEN) is disordered. An ATP-binding site is contributed by 32-42 (LSGGLDSTTCL). 4 residues coordinate Zn(2+): Cys212, Cys221, Cys224, and Cys227.

Belongs to the QueC family. Requires Zn(2+) as cofactor.

The enzyme catalyses 7-carboxy-7-deazaguanine + NH4(+) + ATP = 7-cyano-7-deazaguanine + ADP + phosphate + H2O + H(+). The protein operates within purine metabolism; 7-cyano-7-deazaguanine biosynthesis. Its function is as follows. Catalyzes the ATP-dependent conversion of 7-carboxy-7-deazaguanine (CDG) to 7-cyano-7-deazaguanine (preQ(0)). This is 7-cyano-7-deazaguanine synthase from Leptospira borgpetersenii serovar Hardjo-bovis (strain JB197).